A 135-amino-acid chain; its full sequence is Small ribosomal subunit protein bS16 (135 aa).

A disordered region spans residues 106–135 (TERRQKRLVVKSRRRQAKKEAEGKAAGAEA). The span at 109–122 (RQKRLVVKSRRRQA) shows a compositional bias: basic residues.

This sequence belongs to the bacterial ribosomal protein bS16 family.

The protein is Small ribosomal subunit protein bS16 of Chlorobium phaeobacteroides (strain DSM 266 / SMG 266 / 2430).